Reading from the N-terminus, the 349-residue chain is GTP 3',8-cyclase (349 aa).

In terms of domain architecture, Radical SAM core spans 24-249 (PFGRAITYLR…VDSDYQTGGP (226 aa)). R33 provides a ligand contact to GTP. Residues C40 and C44 each contribute to the [4Fe-4S] cluster site. Residue Y46 participates in S-adenosyl-L-methionine binding. [4Fe-4S] cluster is bound at residue C47. R82 serves as a coordination point for GTP. G86 is a binding site for S-adenosyl-L-methionine. T116 serves as a coordination point for GTP. S140 serves as a coordination point for S-adenosyl-L-methionine. K176 contributes to the GTP binding site. M210 serves as a coordination point for S-adenosyl-L-methionine. Residues C273 and C276 each contribute to the [4Fe-4S] cluster site. A GTP-binding site is contributed by 278–280 (RVR). Residue C290 coordinates [4Fe-4S] cluster.

The protein belongs to the radical SAM superfamily. MoaA family. As to quaternary structure, monomer and homodimer. Requires [4Fe-4S] cluster as cofactor.

It catalyses the reaction GTP + AH2 + S-adenosyl-L-methionine = (8S)-3',8-cyclo-7,8-dihydroguanosine 5'-triphosphate + 5'-deoxyadenosine + L-methionine + A + H(+). Its pathway is cofactor biosynthesis; molybdopterin biosynthesis. Catalyzes the cyclization of GTP to (8S)-3',8-cyclo-7,8-dihydroguanosine 5'-triphosphate. This Agrobacterium fabrum (strain C58 / ATCC 33970) (Agrobacterium tumefaciens (strain C58)) protein is GTP 3',8-cyclase.